Here is an 828-residue protein sequence, read N- to C-terminus: Periplasmic nitrate reductase (828 aa).

Residues 1–32 (MNLSRRDFMKTNAAVAAAAVAGLAIPVKNVEA) constitute a signal peptide (tat-type signal). One can recognise a 4Fe-4S Mo/W bis-MGD-type domain in the interval 38–94 (IKWDKAPCRFCGTGCSVLVGTQNGRVVASQGDPDADVNRGLNCIKGYFLPKIMYGKD). Cys-45, Cys-48, Cys-52, and Cys-80 together coordinate [4Fe-4S] cluster. Mo-bis(molybdopterin guanine dinucleotide) is bound by residues Lys-82, Gln-149, Asn-174, Cys-178, 211 to 218 (WGSNMAEM), 242 to 246 (STFEH), 261 to 263 (QSD), Met-372, Gln-376, Asn-482, 508 to 509 (SD), Lys-531, Asp-558, and 718 to 727 (TGRVLEHWHT). Position 794 (Phe-794) interacts with substrate. Residues Asn-802 and Lys-819 each contribute to the Mo-bis(molybdopterin guanine dinucleotide) site.

The protein belongs to the prokaryotic molybdopterin-containing oxidoreductase family. NasA/NapA/NarB subfamily. In terms of assembly, component of the periplasmic nitrate reductase NapAB complex composed of NapA and NapB. [4Fe-4S] cluster serves as cofactor. Mo-bis(molybdopterin guanine dinucleotide) is required as a cofactor. Predicted to be exported by the Tat system. The position of the signal peptide cleavage has not been experimentally proven.

Its subcellular location is the periplasm. The enzyme catalyses 2 Fe(II)-[cytochrome] + nitrate + 2 H(+) = 2 Fe(III)-[cytochrome] + nitrite + H2O. Functionally, catalytic subunit of the periplasmic nitrate reductase complex NapAB. Receives electrons from NapB and catalyzes the reduction of nitrate to nitrite. The polypeptide is Periplasmic nitrate reductase (Pasteurella multocida (strain Pm70)).